The primary structure comprises 363 residues: Protein-arginine kinase (363 aa).

Positions Ile-24–Ala-254 constitute a Phosphagen kinase C-terminal domain. ATP-binding positions include Ser-27–Arg-31, His-92, Arg-125, Arg-176–Met-180, and Arg-207–Glu-212. The RDXXRA motif of the pArg binding pocket involved in allosteric regulation motif lies at Arg-337 to Ala-342.

Belongs to the ATP:guanido phosphotransferase family.

It catalyses the reaction L-arginyl-[protein] + ATP = N(omega)-phospho-L-arginyl-[protein] + ADP + H(+). With respect to regulation, appears to be allosterically activated by the binding of pArg-containing polypeptides to the pArg-binding pocket localized in the C-terminal domain of McsB. In terms of biological role, catalyzes the specific phosphorylation of arginine residues in a large number of proteins. Is part of the bacterial stress response system. Protein arginine phosphorylation has a physiologically important role and is involved in the regulation of many critical cellular processes, such as protein homeostasis, motility, competence, and stringent and stress responses, by regulating gene expression and protein activity. This chain is Protein-arginine kinase, found in Bacillus velezensis (strain DSM 23117 / BGSC 10A6 / LMG 26770 / FZB42) (Bacillus amyloliquefaciens subsp. plantarum).